We begin with the raw amino-acid sequence, 351 residues long: Selenide, water dikinase (351 aa).

Selenocysteine 15 is a catalytic residue. Position 15 (selenocysteine 15) is a non-standard amino acid, selenocysteine. Residues lysine 18 and 47 to 49 (DNE) each bind ATP. Residue aspartate 50 participates in Mg(2+) binding. ATP is bound by residues aspartate 67, aspartate 90, and 138-140 (GHS). Aspartate 90 contacts Mg(2+). Aspartate 227 serves as a coordination point for Mg(2+).

It belongs to the selenophosphate synthase 1 family. Class I subfamily. In terms of assembly, homodimer. The cofactor is Mg(2+).

The catalysed reaction is hydrogenselenide + ATP + H2O = selenophosphate + AMP + phosphate + 2 H(+). Synthesizes selenophosphate from selenide and ATP. This Nitratidesulfovibrio vulgaris (strain ATCC 29579 / DSM 644 / CCUG 34227 / NCIMB 8303 / VKM B-1760 / Hildenborough) (Desulfovibrio vulgaris) protein is Selenide, water dikinase.